Reading from the N-terminus, the 393-residue chain is S-adenosylmethionine synthase (393 aa).

His-16 provides a ligand contact to ATP. Residue Asp-18 coordinates Mg(2+). Glu-44 is a binding site for K(+). L-methionine contacts are provided by Glu-57 and Gln-100. The interval 100–110 (QSNDIAQGVDH) is flexible loop. Residues 167–169 (DAK), 238–239 (RF), Asp-247, 253–254 (RK), Ala-270, and Lys-274 contribute to the ATP site. Asp-247 provides a ligand contact to L-methionine. Lys-278 serves as a coordination point for L-methionine.

This sequence belongs to the AdoMet synthase family. In terms of assembly, homotetramer; dimer of dimers. Requires Mg(2+) as cofactor. The cofactor is K(+).

It is found in the cytoplasm. The catalysed reaction is L-methionine + ATP + H2O = S-adenosyl-L-methionine + phosphate + diphosphate. It participates in amino-acid biosynthesis; S-adenosyl-L-methionine biosynthesis; S-adenosyl-L-methionine from L-methionine: step 1/1. Catalyzes the formation of S-adenosylmethionine (AdoMet) from methionine and ATP. The overall synthetic reaction is composed of two sequential steps, AdoMet formation and the subsequent tripolyphosphate hydrolysis which occurs prior to release of AdoMet from the enzyme. This Leptothrix cholodnii (strain ATCC 51168 / LMG 8142 / SP-6) (Leptothrix discophora (strain SP-6)) protein is S-adenosylmethionine synthase.